Consider the following 144-residue polypeptide: Large ribosomal subunit protein uL15 (144 aa).

The tract at residues 1 to 48 is disordered; sequence MQLNNLKPAAGSKHAKRRVGRGIGSGLGKTAGRGHKGQKSRSGGFHKV. Residues 21–31 show a composition bias toward gly residues; it reads RGIGSGLGKTA.

Belongs to the universal ribosomal protein uL15 family. Part of the 50S ribosomal subunit.

Binds to the 23S rRNA. The chain is Large ribosomal subunit protein uL15 from Cupriavidus pinatubonensis (strain JMP 134 / LMG 1197) (Cupriavidus necator (strain JMP 134)).